Consider the following 190-residue polypeptide: Dense granule protein 1 (190 aa).

The signal sequence occupies residues 1–24 (MVRVSAIVGAAASVFVCLSAGAYA). Asparagine 30 carries an N-linked (GlcNAc...) asparagine glycan.

The protein localises to the secreted. In Toxoplasma gondii, this protein is Dense granule protein 1 (GRA1).